Here is a 212-residue protein sequence, read N- to C-terminus: Elongation factor Ts (212 aa).

An involved in Mg(2+) ion dislocation from EF-Tu region spans residues 82-85 (SDFV).

Belongs to the EF-Ts family.

The protein resides in the cytoplasm. Associates with the EF-Tu.GDP complex and induces the exchange of GDP to GTP. It remains bound to the aminoacyl-tRNA.EF-Tu.GTP complex up to the GTP hydrolysis stage on the ribosome. This is Elongation factor Ts from Solibacter usitatus (strain Ellin6076).